The primary structure comprises 541 residues: Cytochrome P450 monooxygenase claU (541 aa).

Residues 12–32 traverse the membrane as a helical segment; that stretch reads VIDTLVILFSTWAFLGLIRVI. A heme-binding site is contributed by Cys-480.

This sequence belongs to the cytochrome P450 family. It depends on heme as a cofactor.

It is found in the membrane. It participates in secondary metabolite biosynthesis; terpenoid biosynthesis. Functionally, cytochrome P450 monooxygenase; part of the gene cluster that mediates the biosynthesis of clavilactone A, a meroterpenoid that features a unique benzo-fused ten-membered carbocyclic ring unit with an alpha,beta-epoxy-gamma-lactone moiety, forming an intriguing 10/5/3 tricyclic nested skeleton. Cytochrome P450 monooxygenases claO, claP, claQ, claU, and claW are close orthologs, suggesting that a redundant function or pseudogenes are present in the cla cluster. These monoxygenases are not involved in clavilactone A biosynthesis nor its modification. ClaR, ClaS and ClaT are sufficient to produce clavilactone A. The biosynthesis begins with the prenyltransferase claS that transfers geranyl pyrophosphate (GPP) to hydroquinone to produces geranylhydroquinone. The cytochrome P450 monooxygenase claR then catalyzes the diradical coupling reaction between the intramolecular hydroquinone and allyl moieties to form the benzo-fused ten-membered carbocyclic ring unit of wigantol. Finally the cytochrome P450 monooxygenase claT exquisitely and stereoselectively assembles the alpha,beta-epoxy-gamma-lactone moiety, producing clavilactone A via arnebinol A. The sequence is that of Cytochrome P450 monooxygenase claU from Ampulloclitocybe clavipes (Club foot).